Reading from the N-terminus, the 236-residue chain is Flagellar L-ring protein (236 aa).

The signal sequence occupies residues Met1 to Ala24. Residue Cys25 is the site of N-palmitoyl cysteine attachment. Residue Cys25 is the site of S-diacylglycerol cysteine attachment.

It belongs to the FlgH family. In terms of assembly, the basal body constitutes a major portion of the flagellar organelle and consists of four rings (L,P,S, and M) mounted on a central rod.

It is found in the cell outer membrane. The protein localises to the bacterial flagellum basal body. Assembles around the rod to form the L-ring and probably protects the motor/basal body from shearing forces during rotation. This Colwellia psychrerythraea (strain 34H / ATCC BAA-681) (Vibrio psychroerythus) protein is Flagellar L-ring protein.